The chain runs to 1336 residues: pre-mRNA 3' end processing protein WDR33 (1336 aa).

N-acetylalanine is present on Ala-2. Ser-7 bears the Phosphoserine mark. Residue Lys-46 is modified to N6-acetyllysine. 7 WD repeats span residues 117-156 (KVKCPVFVVRWTPEGRRLVTGASSGEFTLWNGLTFNFETI), 159-198 (AHDSPVRAMTWSHNDMWMLTADHGGYVKYWQSNMNNVKMF), 200-239 (AHKEAIREASFSPTDNKFATCSDDGTVRIWDFLRCHEERI), 242-283 (GHGA…SLAT), 286-325 (AHKNTVMEVKLNLNGNWLLTASRDHLCKLFDIRNLKEELQ), 329-369 (GHKK…EVGG), and 373-412 (AHEGMIWSLAWHPLGHILCSGSNDHTSKFWTRNRPGDKMR). Residues Lys-526, Lys-530, and Lys-560 each participate in a glycyl lysine isopeptide (Lys-Gly) (interchain with G-Cter in SUMO2) cross-link. Positions 568–1336 (QVEQIQPPPS…GASRGGGRGR (769 aa)) are disordered. The segment covering 573–590 (QPPPSSGTPLLGPQPFPG) has biased composition (pro residues). A compositionally biased stretch (polar residues) spans 594 to 607 (MSQIPQGFQQPHPS). The span at 608-643 (QQMPMNMAQMGPPGPQGQFRPPGPQGQMGPQGPPLH) shows a compositional bias: low complexity. Residues 618 to 770 (GPPGPQGQFR…GPGSQGIQGP (153 aa)) form the Collagen-like domain. Residues 683–695 (PHGPLGPQGPPGP) are compositionally biased toward pro residues. 2 stretches are compositionally biased toward low complexity: residues 696–707 (QGSSGPQGHMGP) and 726–751 (QGHLGPQGPPGTQGMQGPPGPRGMQG). Arg-782 carries the omega-N-methylarginine modification. The segment covering 854–869 (GPPGSQSQQGPPQGSL) has biased composition (low complexity). Arg-915 bears the Asymmetric dimethylarginine mark. Residues 932 to 941 (PGLGQQGAQG) are compositionally biased toward low complexity. Composition is skewed to basic and acidic residues over residues 971-989 (SERRHEQSGGPEHGPERGP) and 998-1034 (GPPDRRGPHPDFPDDFSRPDDFHPDKRFGHRLREFEG). An Omega-N-methylarginine modification is found at Arg-987. Omega-N-methylarginine is present on Arg-1035. Basic and acidic residues-rich tracts occupy residues 1056 to 1068 (PDHREFSEGDGRG) and 1078 to 1122 (EGRR…RGRD). A compositionally biased stretch (acidic residues) spans 1130–1140 (FGPEENFDASE). The span at 1141–1150 (EAARGRDLRG) shows a compositional bias: basic and acidic residues. The segment covering 1151-1160 (RGRGTPRGGR) has biased composition (basic residues). 2 stretches are compositionally biased toward basic and acidic residues: residues 1169-1217 (EFPR…RERS) and 1242-1259 (SEHREMEAPGGPSEDRGG). Ser-1210 is modified (phosphoserine). Residue Arg-1262 is modified to Omega-N-methylarginine. Residues 1281–1293 (DGEHHDGYHRDEP) are compositionally biased toward basic and acidic residues. Low complexity predominate over residues 1301–1326 (GTPSRGGRSGSNWGRGSNMNSGPPRR). An Asymmetric dimethylarginine; alternate modification is found at Arg-1315. Position 1315 is an omega-N-methylarginine; alternate (Arg-1315).

Belongs to the WD repeat WDR33 family. As to quaternary structure, component of the cleavage and polyadenylation specificity factor (CPSF) module of the pre-mRNA 3'-end processing complex. Interacts with CPSF3/CPSF73. As to expression, most highly expressed in testis.

It is found in the nucleus. Functionally, essential for both cleavage and polyadenylation of pre-mRNA 3' ends. The polypeptide is pre-mRNA 3' end processing protein WDR33 (WDR33) (Homo sapiens (Human)).